Consider the following 212-residue polypeptide: ER lumen protein-retaining receptor 1 (212 aa).

The Lumenal segment spans residues methionine 1–phenylalanine 4. The chain crosses the membrane as a helical span at residues arginine 5–tryptophan 24. Residues lysine 25–isoleucine 32 are Cytoplasmic-facing. Residues serine 33–phenylalanine 52 form a helical membrane-spanning segment. The interaction with the K-D-E-L motif on target proteins stretch occupies residues arginine 47–tyrosine 48. Residues threonine 53–leucine 58 are Lumenal-facing. The helical transmembrane segment at tyrosine 59–tyrosine 79 threads the bilayer. Residues serine 80–threonine 92 lie on the Cytoplasmic side of the membrane. The chain crosses the membrane as a helical span at residues phenylalanine 93–asparagine 110. Over histidine 111 to leucine 116 the chain is Lumenal. Residues glutamate 117–leucine 135 traverse the membrane as a helical segment. Topologically, residues phenylalanine 136–serine 149 are cytoplasmic. A helical membrane pass occupies residues histidine 150 to tryptophan 168. Residues arginine 159–arginine 169 are interaction with the K-D-E-L motif on target proteins. Residues arginine 169–leucine 178 lie on the Lumenal side of the membrane. A helical membrane pass occupies residues isoleucine 179–isoleucine 199. Topologically, residues threonine 200–alanine 212 are cytoplasmic. Residues lysine 204 to lysine 207 are important for recycling of cargo proteins with the sequence motif K-D-E-L from the Golgi to the endoplasmic reticulum. A Phosphoserine; by PKA modification is found at serine 209.

The protein belongs to the ERD2 family. Upon ligand binding the receptor oligomerizes and interacts with components of the transport machinery such as ARFGAP1 and ARF1. Post-translationally, phosphorylation by PKA at Ser-209 is required for endoplasmic reticulum retention function.

Its subcellular location is the golgi apparatus membrane. It localises to the cytoplasmic vesicle. It is found in the COPI-coated vesicle membrane. The protein localises to the endoplasmic reticulum membrane. The protein resides in the endoplasmic reticulum-Golgi intermediate compartment membrane. Its function is as follows. Receptor for the C-terminal sequence motif K-D-E-L that is present on endoplasmic reticulum resident proteins and that mediates their recycling from the Golgi back to the endoplasmic reticulum. In Rattus norvegicus (Rat), this protein is ER lumen protein-retaining receptor 1 (Kdelr1).